The following is a 282-amino-acid chain: D-alanine aminotransferase (282 aa).

Y32 lines the substrate pocket. Position 51 (R51) interacts with pyridoxal 5'-phosphate. Substrate-binding residues include R99 and H101. K146 acts as the Proton acceptor in catalysis. K146 is subject to N6-(pyridoxal phosphate)lysine. E178 contributes to the pyridoxal 5'-phosphate binding site.

This sequence belongs to the class-IV pyridoxal-phosphate-dependent aminotransferase family. As to quaternary structure, homodimer. Pyridoxal 5'-phosphate is required as a cofactor.

It catalyses the reaction D-alanine + 2-oxoglutarate = D-glutamate + pyruvate. Acts on the D-isomers of alanine, leucine, aspartate, glutamate, aminobutyrate, norvaline and asparagine. The enzyme transfers an amino group from a substrate D-amino acid to the pyridoxal phosphate cofactor to form pyridoxamine and an alpha-keto acid in the first half-reaction. The second half-reaction is the reverse of the first, transferring the amino group from the pyridoxamine to a second alpha-keto acid to form the product D-amino acid via a ping-pong mechanism. This is an important process in the formation of D-alanine and D-glutamate, which are essential bacterial cell wall components. The sequence is that of D-alanine aminotransferase (dat) from Staphylococcus epidermidis (strain ATCC 35984 / DSM 28319 / BCRC 17069 / CCUG 31568 / BM 3577 / RP62A).